Reading from the N-terminus, the 503-residue chain is ATP synthase subunit alpha (503 aa).

170–177 (GDKQTGKT) is an ATP binding site.

This sequence belongs to the ATPase alpha/beta chains family. In terms of assembly, F-type ATPases have 2 components, CF(1) - the catalytic core - and CF(0) - the membrane proton channel. CF(1) has five subunits: alpha(3), beta(3), gamma(1), delta(1), epsilon(1). CF(0) has three main subunits: a(1), b(2) and c(9-12). The alpha and beta chains form an alternating ring which encloses part of the gamma chain. CF(1) is attached to CF(0) by a central stalk formed by the gamma and epsilon chains, while a peripheral stalk is formed by the delta and b chains.

It localises to the cell inner membrane. It carries out the reaction ATP + H2O + 4 H(+)(in) = ADP + phosphate + 5 H(+)(out). Its function is as follows. Produces ATP from ADP in the presence of a proton gradient across the membrane. The alpha chain is a regulatory subunit. The polypeptide is ATP synthase subunit alpha (Helicobacter pylori (strain G27)).